Reading from the N-terminus, the 728-residue chain is MPVLPDRDVIDQLFSGNSADPFSLLGMHAADNGLQVRALLPDASEVWLLEQQTGRRLVQLNCDDARGFFSATVPRRKTPFRYQFEVRWQDHQQIVDDPYRFGTLLQDIDSWLLAEGTHLRPYERLGAHLSTLDDVEGVSFAVWAPNAQRVSVVGEFNFWDGRRHPMRLRRENGIWELFLPGVKAGQLYKYEIIDCYGNTQLKADPYAFEAQMRPDTASLVTPLPEVVENTPQRQRANDFDRPISIYEVHLGSWRRHTDDNFWLSYGELAVQLIDYVKDMGFTHIELLPINEHPFDGSWGYQPLGLYAPTRRFGTPADFKDFVAAAHRAGINVILDWVPGHFPSDAYGLANFDGTALYEYADPREGFHQDWNTLIYNYGRHEVRNYLAGNALYWLERYGIDALRVDAVASMIYRDYSRAEGEWVPNYYGGNENLEAIAFLRYTNQSVGKERPGAVTLAEESTDYPGVTLPPESNGLGFHYKWNLGWMHDTLNYMQCDPVHRKYHHNQMTFGMLYAYTENFVLPISHDEVVHGKKSILDRMPGDAWQKFANLRAYYGFMWAHPGKKLLFMGCEFAQGREWNFDSSLDWHLLEGLDGWHHGVQRLVRDLNHCYQQQAPLYERDYRPDGFEWLVVDDHDNSVFAFARYDAHGNELIAVSNFTPVPRHHYRIGISRPGEYREILNTDSHHYHGSNTGNQGRVVSEQIGNHGREHSISVTVPPLATIYLLREAQ.

Aspartate 405 acts as the Nucleophile in catalysis. Catalysis depends on glutamate 458, which acts as the Proton donor.

It belongs to the glycosyl hydrolase 13 family. GlgB subfamily. As to quaternary structure, monomer.

The enzyme catalyses Transfers a segment of a (1-&gt;4)-alpha-D-glucan chain to a primary hydroxy group in a similar glucan chain.. It participates in glycan biosynthesis; glycogen biosynthesis. Functionally, catalyzes the formation of the alpha-1,6-glucosidic linkages in glycogen by scission of a 1,4-alpha-linked oligosaccharide from growing alpha-1,4-glucan chains and the subsequent attachment of the oligosaccharide to the alpha-1,6 position. In Serratia proteamaculans (strain 568), this protein is 1,4-alpha-glucan branching enzyme GlgB.